A 691-amino-acid polypeptide reads, in one-letter code: MARAFPLERVRNIGIAAHIDAGKTTCTERILFYSGVVHKMGEVHDGAAVTDWMAQERERGITITAAAISTTWNDHRINIIDTPGHVDFTIEVERSMRVLDGVIAVFCAVGGVQPQSETVWRQADRYSVPRMVFVNKMDRTGADFLKVHGQIKNRLKANAIPIQLPIGAEGDLSGIIDLVKNKAFIYKDDLGKDIEETEIPDHMKELAAEWRAKLMECVAETDEELIEVFLETEELSEAQLASGIREGVLNHGLVPLLCGSAFKNKGVQLLLDAVVDYLPAPVDVPPIQGLLPNGKEAVRPSDDNAPFSALAFKVMADPYGKLTFVRMYSGVLEKGSYVLNSTKNEKERISRLIILKADDREEVDALRAGDLGAVLGLKNTTTGDTLCTTDDPIVLETLYIPEPVISVAVEPKTKGDMEKLSKALLSLAEEDPTFRVSTDPETSQTVIAGMGELHLEILVDRMLREFKVEANIGAPQVSYRETIRASSKGEGKFARQTGGKGQYGHVVIEMEPGEPGSGFEFVNKIVGGIVPKEYIKPAESGMRETCESGVIAGYPLIDVKVTMVDGSYHDVDSSEMAFKIAGSMAFKDGVKKCNPVLLEPMMKVEVEIPEDFLGSIIGDLSSRRGQVEGQSIDDGLSKVQSKVPLAEMFGYATQLRSMTQGRGIFSMEFSHYEEVPRNVAEAIISKNQGNS.

The tr-type G domain occupies 8–282 (ERVRNIGIAA…AVVDYLPAPV (275 aa)). GTP-binding positions include 17-24 (AHIDAGKT), 81-85 (DTPGH), and 135-138 (NKMD).

It belongs to the TRAFAC class translation factor GTPase superfamily. Classic translation factor GTPase family. EF-G/EF-2 subfamily.

The protein localises to the cytoplasm. Its function is as follows. Catalyzes the GTP-dependent ribosomal translocation step during translation elongation. During this step, the ribosome changes from the pre-translocational (PRE) to the post-translocational (POST) state as the newly formed A-site-bound peptidyl-tRNA and P-site-bound deacylated tRNA move to the P and E sites, respectively. Catalyzes the coordinated movement of the two tRNA molecules, the mRNA and conformational changes in the ribosome. The protein is Elongation factor G of Prochlorococcus marinus (strain MIT 9303).